We begin with the raw amino-acid sequence, 72 residues long: UPF0352 protein Shal_2512 (72 aa).

This sequence belongs to the UPF0352 family.

This chain is UPF0352 protein Shal_2512, found in Shewanella halifaxensis (strain HAW-EB4).